The primary structure comprises 792 residues: Endonuclease MutS2 (792 aa).

335-342 contacts ATP; that stretch reads GPNTGGKT. One can recognise a Smr domain in the interval 717 to 792; sequence VDLRGLNLEE…GAGVTIVKLK (76 aa).

It belongs to the DNA mismatch repair MutS family. MutS2 subfamily. As to quaternary structure, homodimer. Binds to stalled ribosomes, contacting rRNA.

In terms of biological role, endonuclease that is involved in the suppression of homologous recombination and thus may have a key role in the control of bacterial genetic diversity. Acts as a ribosome collision sensor, splitting the ribosome into its 2 subunits. Detects stalled/collided 70S ribosomes which it binds and splits by an ATP-hydrolysis driven conformational change. Acts upstream of the ribosome quality control system (RQC), a ribosome-associated complex that mediates the extraction of incompletely synthesized nascent chains from stalled ribosomes and their subsequent degradation. Probably generates substrates for RQC. The polypeptide is Endonuclease MutS2 (Clostridioides difficile (strain 630) (Peptoclostridium difficile)).